The chain runs to 371 residues: Nuclear hormone receptor family member nhr-51 (371 aa).

A DNA-binding region (nuclear receptor) is located at residues 2–77 (NKNCLICHRK…MGMQAFPRRV (76 aa)). NR C4-type zinc fingers lie at residues 5 to 25 (CLIC…CFAC) and 41 to 60 (CQKF…CKAC). The region spanning 98–337 (MDEQRHWRML…KQLVTDTFVD (240 aa)) is the NR LBD domain.

Belongs to the nuclear hormone receptor family.

The protein resides in the nucleus. Functionally, orphan nuclear receptor. In Caenorhabditis elegans, this protein is Nuclear hormone receptor family member nhr-51 (nhr-51).